Here is an 847-residue protein sequence, read N- to C-terminus: Acyl-homoserine lactone acylase QuiP (847 aa).

An N-terminal signal peptide occupies residues 1-26 (MASPAFMRFLPRCGAAAAFGTLLGLA). The Nucleophile role is filled by Ser265.

The protein belongs to the peptidase S45 family. Heterodimer of an alpha subunit and a beta subunit processed from the same precursor.

The protein localises to the periplasm. It carries out the reaction an N-acyl-L-homoserine lactone + H2O = L-homoserine lactone + a carboxylate. Its function is as follows. Catalyzes the deacylation of acyl-homoserine lactone (AHL or acyl-HSL), releasing homoserine lactone (HSL) and the corresponding fatty acid. Possesses a specificity for the degradation of long-chain acyl-HSLs (side chains of seven or more carbons in length). Appears to be the acyl-HSL acylase that underlies the ability of P.aeruginosa to degrade and utilize certain acyl-HSLs as growth nutrients, including one of its own quorum signals, 3-oxo-C12-HSL. Is thought to have a role in quorum quenching. This chain is Acyl-homoserine lactone acylase QuiP (quiP), found in Pseudomonas aeruginosa (strain ATCC 15692 / DSM 22644 / CIP 104116 / JCM 14847 / LMG 12228 / 1C / PRS 101 / PAO1).